A 131-amino-acid chain; its full sequence is Small ribosomal subunit protein uS8 (131 aa).

The protein belongs to the universal ribosomal protein uS8 family. Part of the 30S ribosomal subunit. Contacts proteins S5 and S12.

Its function is as follows. One of the primary rRNA binding proteins, it binds directly to 16S rRNA central domain where it helps coordinate assembly of the platform of the 30S subunit. This chain is Small ribosomal subunit protein uS8, found in Nitrosomonas europaea (strain ATCC 19718 / CIP 103999 / KCTC 2705 / NBRC 14298).